Here is a 560-residue protein sequence, read N- to C-terminus: Zorya protein ZorC (560 aa).

Component of antiviral defense system Zorya type I, composed of ZorA, ZorB, ZorC and ZorD. Expression of Zorya type I in E.coli (strain MG1655) confers 10,000-fold resistance to phage SECphi27, 100-fold resistance to lambda, and 10-fold resistance to T7. While most T7 infected Zorya-containing cells undergo abortive infection, a minority produce viable phage progeny. These eventually accumulate to a high multiplicity of infection, leading to culture collapse by 2 hours after initial infection. ZorA and ZorB probably assemble in the cell inner membrane and exert their effect there. The chain is Zorya protein ZorC from Escherichia coli O139:H28 (strain E24377A / ETEC).